Here is a 107-residue protein sequence, read N- to C-terminus: Ribosome-associated factor Y (107 aa).

The disordered stretch occupies residues 85 to 107 (LNKLQHKSESRRADERLKDSFEN).

Associates mainly with 70S ribosomes.

In terms of biological role, during stationary phase, prevents 70S dimer formation, probably in order to regulate translation efficiency during transition between the exponential and the stationary phases. In addition, during environmental stress such as cold shock or excessive cell density at stationary phase, stabilizes the 70S ribosome against dissociation, inhibits translation initiation and increase translation accuracy. When normal growth conditions are restored, is quickly released from the ribosome. The protein is Ribosome-associated factor Y of Haemophilus influenzae (strain ATCC 51907 / DSM 11121 / KW20 / Rd).